The primary structure comprises 525 residues: ATP synthase subunit alpha (525 aa).

Residue 169-176 (GDRQTGKT) participates in ATP binding.

It belongs to the ATPase alpha/beta chains family. F-type ATPases have 2 components, CF(1) - the catalytic core - and CF(0) - the membrane proton channel. CF(1) has five subunits: alpha(3), beta(3), gamma(1), delta(1), epsilon(1). CF(0) has three main subunits: a(1), b(2) and c(9-12). The alpha and beta chains form an alternating ring which encloses part of the gamma chain. CF(1) is attached to CF(0) by a central stalk formed by the gamma and epsilon chains, while a peripheral stalk is formed by the delta and b chains.

It is found in the cell membrane. The enzyme catalyses ATP + H2O + 4 H(+)(in) = ADP + phosphate + 5 H(+)(out). Its function is as follows. Produces ATP from ADP in the presence of a proton gradient across the membrane. The alpha chain is a regulatory subunit. In Mycoplasma mycoides subsp. mycoides SC (strain CCUG 32753 / NCTC 10114 / PG1), this protein is ATP synthase subunit alpha.